The sequence spans 214 residues: Large ribosomal subunit protein uL29m (214 aa).

Belongs to the universal ribosomal protein uL29 family. In terms of assembly, component of the mitochondrial large ribosomal subunit. Mature mitochondrial ribosomes consist of a small (37S) and a large (54S) subunit. The 37S subunit contains at least 33 different proteins and 1 molecule of RNA (15S). The 54S subunit contains at least 45 different proteins and 1 molecule of RNA (21S).

The protein localises to the mitochondrion. The sequence is that of Large ribosomal subunit protein uL29m (mrpl4) from Aspergillus terreus (strain NIH 2624 / FGSC A1156).